A 450-amino-acid chain; its full sequence is Glutamate-1-semialdehyde 2,1-aminomutase (450 aa).

An N6-(pyridoxal phosphate)lysine modification is found at K262.

It belongs to the class-III pyridoxal-phosphate-dependent aminotransferase family. HemL subfamily. As to quaternary structure, homodimer. The cofactor is pyridoxal 5'-phosphate.

It localises to the cytoplasm. It carries out the reaction (S)-4-amino-5-oxopentanoate = 5-aminolevulinate. Its pathway is porphyrin-containing compound metabolism; protoporphyrin-IX biosynthesis; 5-aminolevulinate from L-glutamyl-tRNA(Glu): step 2/2. The polypeptide is Glutamate-1-semialdehyde 2,1-aminomutase (Campylobacter hominis (strain ATCC BAA-381 / DSM 21671 / CCUG 45161 / LMG 19568 / NCTC 13146 / CH001A)).